The sequence spans 544 residues: MSDSLDNEEKPPAPPLRMNSNNRDSSALNHSSKPLPMAPEEKNKKARLRSIFPGGGDKTNKKKEKERPEISLPSDFEHTIHVGFDAVTGEFTGIPEQWARLLQTSNITKLEQKKNPQAVLDVLKFYDSKETVNNQKYMSFTSGDKSAHGYIAAHQSNTKTASEPPLAPPVSEEEDEEEEEEEDDNEPPPVIAPRPEHTKSIYTRSVVESIASPAAPNKEATPPSAENANSSTLYRNTDRQRKKSKMTDEEILEKLRSIVSVGDPKKKYTRFEKIGQGASGTVYTALDIATGQEVAIKQMNLQQQPKKELIINEILVMRENKNPNIVNYLDSYLVGDELWVVMEYLAGGSLTDVVTETCMDEGQIAAVCRECLQALDFLHSNQVIHRDIKSDNILLGMDGSVKLTDFGFCAQITPEQSKRSTMVGTPYWMAPEVVTRKAYGPKVDIWSLGIMAIEMVEGEPPYLNENPLRALYLIATNGTPELQNPERLSAVFRDFLNRCLEMDVDRRGSAKELLQHPFLKLAKPLSSLTPLILAAKEAIKNSSR.

Positions 1-73 are disordered; sequence MSDSLDNEEK…EKERPEISLP (73 aa). 2 positions are modified to phosphoserine: serine 2 and serine 4. The segment covering 18–32 has biased composition (polar residues); the sequence is MNSNNRDSSALNHSS. Residue serine 50 is modified to Phosphoserine; by autocatalysis. Positions 63–73 are enriched in basic and acidic residues; sequence KEKERPEISLP. Residues 65–108 are GTPase-binding; that stretch reads KERPEISLPSDFEHTIHVGFDAVTGEFTGIPEQWARLLQTSNIT. Positions 65–135 are autoregulatory region; the sequence is KERPEISLPS…YDSKETVNNQ (71 aa). The CRIB domain maps to 70–83; the sequence is ISLPSDFEHTIHVG. The linker stretch occupies residues 84-267; it reads FDAVTGEFTG…IVSVGDPKKK (184 aa). Serine 139 carries the phosphoserine; by autocatalysis modification. Disordered regions lie at residues 156–197 and 213–248; these read SNTK…RPEH and PAAPNKEATPPSAENANSSTLYRNTDRQRKKSKMTD. Serine 171 carries the post-translational modification Phosphoserine. Residues 171–186 show a composition bias toward acidic residues; sequence SEEEDEEEEEEEDDNE. Polar residues predominate over residues 224–235; it reads SAENANSSTLYR. The region spanning 268-519 is the Protein kinase domain; it reads YTRFEKIGQG…AKELLQHPFL (252 aa). ATP contacts are provided by residues 274 to 282 and lysine 297; that span reads IGQGASGTV. Aspartate 387 acts as the Proton acceptor in catalysis. Threonine 421 carries the post-translational modification Phosphothreonine; by autocatalysis.

It belongs to the protein kinase superfamily. STE Ser/Thr protein kinase family. STE20 subfamily. In terms of assembly, interacts tightly with GTP-bound but not GDP-bound CDC42/p21 and RAC1. Shows highly specific binding to the SH3 domains of phospholipase C-gamma and of adapter protein NCK. Interacts with the C-terminal of APP. Interacts with ARHGEF6 and ARHGEF7. Interacts with GIT1 and GIT2. It depends on Mg(2+) as a cofactor. In terms of processing, autophosphorylated when activated by CDC42/p21. Post-translationally, neddylated. As to expression, detected at high levels in the brain and at low levels in the testis.

It is found in the cytoplasm. It catalyses the reaction L-seryl-[protein] + ATP = O-phospho-L-seryl-[protein] + ADP + H(+). The catalysed reaction is L-threonyl-[protein] + ATP = O-phospho-L-threonyl-[protein] + ADP + H(+). With respect to regulation, activated by binding small G proteins. Binding of GTP-bound CDC42 or RAC1 to the autoregulatory region releases monomers from the autoinhibited dimer, enables phosphorylation of Thr-421 and allows the kinase domain to adopt an active structure. In terms of biological role, serine/threonine protein kinase that plays a role in a variety of different signaling pathways including cytoskeleton regulation, cell migration, or cell cycle regulation. Plays a role in dendrite spine morphogenesis as well as synapse formation and plasticity. Acts as a downstream effector of the small GTPases CDC42 and RAC1. Activation by the binding of active CDC42 and RAC1 results in a conformational change and a subsequent autophosphorylation on several serine and/or threonine residues. Phosphorylates MAPK4 and MAPK6 and activates the downstream target MAPKAPK5, a regulator of F-actin polymerization and cell migration. Additionally, phosphorylates TNNI3/troponin I to modulate calcium sensitivity and relaxation kinetics of thin myofilaments. May also be involved in early neuronal development. In hippocampal neurons, necessary for the formation of dendritic spines and excitatory synapses; this function is dependent on kinase activity and may be exerted by the regulation of actomyosin contractility through the phosphorylation of myosin II regulatory light chain (MLC). The protein is Serine/threonine-protein kinase PAK 3 (Pak3) of Rattus norvegicus (Rat).